The following is a 251-amino-acid chain: GTP cyclohydrolase 1 type 2 homolog (251 aa).

5 residues coordinate a divalent metal cation: His-64, His-65, Asp-102, His-219, and Glu-223.

The protein belongs to the GTP cyclohydrolase I type 2/NIF3 family. In terms of assembly, homohexamer.

This Chlamydia pneumoniae (Chlamydophila pneumoniae) protein is GTP cyclohydrolase 1 type 2 homolog.